A 264-amino-acid chain; its full sequence is Electron transfer flavoprotein subunit beta (264 aa).

Residues Ala6, 36–39, Val64, 119–122, and 127–130 each bind AMP; these read NEWD, GVQS, and YAST.

As to quaternary structure, heterodimer of an alpha and a beta subunit. Forms a ternary complex with trimethylamine dehydrogenase.

Heterodimeric electron transfer flavoprotein that accepts electrons from trimethylamine dehydrogenase. It transfers the electrons to the main respiratory chain via ETF-ubiquinone oxidoreductase (ETF dehydrogenase). EtfB binds an AMP molecule that probably has a purely structural role. The sequence is that of Electron transfer flavoprotein subunit beta (etfB) from Methylophilus methylotrophus (Bacterium W3A1).